The sequence spans 132 residues: Large ribosomal subunit protein bL17 (132 aa).

It belongs to the bacterial ribosomal protein bL17 family. As to quaternary structure, part of the 50S ribosomal subunit. Contacts protein L32.

This Albidiferax ferrireducens (strain ATCC BAA-621 / DSM 15236 / T118) (Rhodoferax ferrireducens) protein is Large ribosomal subunit protein bL17.